The following is a 265-amino-acid chain: Tryptophan synthase alpha chain (265 aa).

Catalysis depends on proton acceptor residues Glu-48 and Asp-59.

Belongs to the TrpA family. In terms of assembly, tetramer of two alpha and two beta chains.

It carries out the reaction (1S,2R)-1-C-(indol-3-yl)glycerol 3-phosphate + L-serine = D-glyceraldehyde 3-phosphate + L-tryptophan + H2O. It participates in amino-acid biosynthesis; L-tryptophan biosynthesis; L-tryptophan from chorismate: step 5/5. The alpha subunit is responsible for the aldol cleavage of indoleglycerol phosphate to indole and glyceraldehyde 3-phosphate. The polypeptide is Tryptophan synthase alpha chain (Pelagibacter ubique (strain HTCC1062)).